The chain runs to 676 residues: DNA ligase (676 aa).

NAD(+) contacts are provided by residues aspartate 34–aspartate 38, serine 84–leucine 85, and glutamate 116. Lysine 118 (N6-AMP-lysine intermediate) is an active-site residue. Residues arginine 139, glutamate 174, lysine 294, and lysine 318 each coordinate NAD(+). Zn(2+) contacts are provided by cysteine 412, cysteine 415, cysteine 428, and cysteine 433. Residues lysine 589–valine 676 form the BRCT domain.

This sequence belongs to the NAD-dependent DNA ligase family. LigA subfamily. Mg(2+) serves as cofactor. It depends on Mn(2+) as a cofactor.

It carries out the reaction NAD(+) + (deoxyribonucleotide)n-3'-hydroxyl + 5'-phospho-(deoxyribonucleotide)m = (deoxyribonucleotide)n+m + AMP + beta-nicotinamide D-nucleotide.. Its function is as follows. DNA ligase that catalyzes the formation of phosphodiester linkages between 5'-phosphoryl and 3'-hydroxyl groups in double-stranded DNA using NAD as a coenzyme and as the energy source for the reaction. It is essential for DNA replication and repair of damaged DNA. This chain is DNA ligase, found in Thermus thermophilus (strain ATCC 27634 / DSM 579 / HB8).